A 693-amino-acid chain; its full sequence is Sister chromatid cohesion 1 protein 3 (693 aa).

Disordered stretches follow at residues 167 to 250 (IPMD…PGTV), 262 to 361 (DLSP…KNFD), 460 to 511 (PVSP…TFDN), and 545 to 573 (TQSGNWETESYRTEPSTSTVPEDLPGQRN). Composition is skewed to basic and acidic residues over residues 178–201 (VSRHTGEIDVETAHETGPDNEPRD) and 232–243 (TEERIPNSERND). Residues 264–277 (SPTSHPSFAAQQQD) are compositionally biased toward polar residues. A compositionally biased stretch (basic and acidic residues) spans 278 to 295 (VRVERTESLDETLNEKEP). Over residues 316–325 (RSGSPGSAAG) the composition is skewed to low complexity. Polar residues-rich tracts occupy residues 465–483 (PDSTNPDSTVQLSPAQQTE) and 545–564 (TQSGNWETESYRTEPSTSTV).

The protein belongs to the rad21 family. In terms of assembly, component of the cohesin complex. Low expression in shoots, buds, siliques, leaves and roots. Found in, but not limited to, actively dividing cells: in procambium, protoderm and ground meristem in roots, and in shoot and floral meristems.

The protein resides in the nucleus. In terms of biological role, may be involved in sister chromatid cohesion during mitosis. The sequence is that of Sister chromatid cohesion 1 protein 3 (SYN3) from Arabidopsis thaliana (Mouse-ear cress).